We begin with the raw amino-acid sequence, 193 residues long: Thymidine kinase (193 aa).

Residues 16–23 (GPMFSGKS) and 89–92 (DEIQ) contribute to the ATP site. Glu90 serves as the catalytic Proton acceptor. The Zn(2+) site is built by Cys146, Cys149, Cys184, and Cys187.

Belongs to the thymidine kinase family. In terms of assembly, homotetramer.

Its subcellular location is the cytoplasm. It carries out the reaction thymidine + ATP = dTMP + ADP + H(+). The sequence is that of Thymidine kinase from Thermoanaerobacter pseudethanolicus (strain ATCC 33223 / 39E) (Clostridium thermohydrosulfuricum).